The following is a 523-amino-acid chain: NAD(P)H-quinone oxidoreductase subunit 2 (523 aa).

Transmembrane regions (helical) follow at residues 29 to 49 (AIAP…VDLA), 57 to 77 (WVPP…AQQW), 94 to 114 (LAIA…LISW), 123 to 143 (PIGE…LLCG), 147 to 167 (LVSV…LAGY), 182 to 202 (LLVG…LYGL), 221 to 243 (PLAA…AVPF), 255 to 275 (PTPV…ALAL), 291 to 311 (LLFT…ALAQ), 317 to 337 (MLAY…VCGT), 345 to 365 (VLYM…IILF), 389 to 409 (LGLS…GFFG), 424 to 444 (LLVV…ISVI), and 477 to 497 (IALV…NPLF).

It belongs to the complex I subunit 2 family. NDH-1 can be composed of about 15 different subunits; different subcomplexes with different compositions have been identified which probably have different functions.

The protein resides in the cellular thylakoid membrane. It catalyses the reaction a plastoquinone + NADH + (n+1) H(+)(in) = a plastoquinol + NAD(+) + n H(+)(out). The enzyme catalyses a plastoquinone + NADPH + (n+1) H(+)(in) = a plastoquinol + NADP(+) + n H(+)(out). NDH-1 shuttles electrons from an unknown electron donor, via FMN and iron-sulfur (Fe-S) centers, to quinones in the respiratory and/or the photosynthetic chain. The immediate electron acceptor for the enzyme in this species is believed to be plastoquinone. Couples the redox reaction to proton translocation, and thus conserves the redox energy in a proton gradient. Cyanobacterial NDH-1 also plays a role in inorganic carbon-concentration. The sequence is that of NAD(P)H-quinone oxidoreductase subunit 2 from Prochlorococcus marinus (strain MIT 9303).